Consider the following 389-residue polypeptide: Pyruvate dehydrogenase E1 component subunit alpha, somatic form, mitochondrial (389 aa).

The N-terminal 28 residues, 1–28, are a transit peptide targeting the mitochondrion; the sequence is GKMLAAVSRVLSGVAQKPASRVLVASRT. Lys-62 bears the N6-acetyllysine; alternate mark. Lys-62 carries the N6-succinyllysine; alternate modification. Residues His-91, Tyr-117, Arg-118, Ala-156, Gly-164, Val-166, Asp-195, Gly-196, Ala-197, Asn-224, and Tyr-226 each coordinate pyruvate. Thiamine diphosphate is bound by residues Tyr-117 and Arg-118. Thiamine diphosphate-binding residues include Gly-164, Val-166, Asp-195, Gly-196, Ala-197, and Asn-224. Asp-195 contributes to the Mg(2+) binding site. Asn-224 and Tyr-226 together coordinate Mg(2+). At Ser-231 the chain carries Phosphoserine; by PDK1. Lys-243 carries the N6-acetyllysine; alternate modification. Lys-243 carries the post-translational modification N6-succinyllysine; alternate. At Lys-276 the chain carries N6-succinyllysine. His-291 contacts thiamine diphosphate. Ser-292 is subject to Phosphoserine; by PDK1, PDK2, PDK3 and PDK4. Position 294 is a phosphoserine (Ser-294). Phosphoserine; by PDK1, PDK2, PDK3 and PDK4 is present on Ser-299. Tyr-300 carries the post-translational modification Phosphotyrosine. Lys-312 is modified (N6-acetyllysine; alternate). Residue Lys-312 is modified to N6-succinyllysine; alternate. N6-acetyllysine is present on residues Lys-320 and Lys-335. An N6-succinyllysine modification is found at Lys-384.

As to quaternary structure, heterotetramer of two PDHA1 and two PDHB subunits. The heterotetramer interacts with DLAT, and is part of the multimeric pyruvate dehydrogenase complex that contains multiple copies of pyruvate dehydrogenase (E1), dihydrolipoamide acetyltransferase (DLAT, E2) and lipoamide dehydrogenase (DLD, E3). These subunits are bound to an inner core composed of about 48 DLAT and 12 PDHX molecules. The cofactor is thiamine diphosphate. Requires Mg(2+) as cofactor. In terms of processing, phosphorylation at Ser-231, Ser-292 and Ser-299 by PDK family kinases inactivates the enzyme; for this phosphorylation at a single site is sufficient. Phosphorylation at Ser-292 interferes with access to active site, and thereby inactivates the enzyme. Dephosphorylation at all three sites, i.e. at Ser-231, Ser-292 and Ser-299, is required for reactivation. Post-translationally, acetylation alters the phosphorylation pattern. Deacetylated by SIRT3.

The protein localises to the mitochondrion matrix. The catalysed reaction is N(6)-[(R)-lipoyl]-L-lysyl-[protein] + pyruvate + H(+) = N(6)-[(R)-S(8)-acetyldihydrolipoyl]-L-lysyl-[protein] + CO2. Its activity is regulated as follows. Pyruvate dehydrogenase activity is inhibited by phosphorylation of PDHA1; it is reactivated by dephosphorylation. In terms of biological role, the pyruvate dehydrogenase complex catalyzes the overall conversion of pyruvate to acetyl-CoA and CO(2), and thereby links the glycolytic pathway to the tricarboxylic cycle. In Sus scrofa (Pig), this protein is Pyruvate dehydrogenase E1 component subunit alpha, somatic form, mitochondrial (PDHA1).